Here is a 137-residue protein sequence, read N- to C-terminus: Transcription antitermination protein NusB (137 aa).

This sequence belongs to the NusB family.

Functionally, involved in transcription antitermination. Required for transcription of ribosomal RNA (rRNA) genes. Binds specifically to the boxA antiterminator sequence of the ribosomal RNA (rrn) operons. The chain is Transcription antitermination protein NusB from Clavibacter michiganensis subsp. michiganensis (strain NCPPB 382).